We begin with the raw amino-acid sequence, 222 residues long: MRFFIDTANLEDIKKAYKLGVLAGVTTNPSLVAKEGVKFEDRIAEICQAVPKVESVSAEVTPDAVTAEEMIAQAEELIKINGGDKNVTIKLPMTLAGLEACRYLTEKGVKTNVTLIFTVNQALLAARAGATYVSPFLGRLDDISEDGVLLVAKIAELFDVHQLDTQIIAASVRHPDHVTRVAMAGAHIATIPYKVIEQLAMHPLTDQGIEKFAADWAKAPKL.

K90 functions as the Schiff-base intermediate with substrate in the catalytic mechanism.

Belongs to the transaldolase family. Type 3B subfamily.

Its subcellular location is the cytoplasm. The enzyme catalyses D-sedoheptulose 7-phosphate + D-glyceraldehyde 3-phosphate = D-erythrose 4-phosphate + beta-D-fructose 6-phosphate. It functions in the pathway carbohydrate degradation; pentose phosphate pathway; D-glyceraldehyde 3-phosphate and beta-D-fructose 6-phosphate from D-ribose 5-phosphate and D-xylulose 5-phosphate (non-oxidative stage): step 2/3. Transaldolase is important for the balance of metabolites in the pentose-phosphate pathway. The protein is Probable transaldolase 2 of Bacillus cereus (strain ATCC 14579 / DSM 31 / CCUG 7414 / JCM 2152 / NBRC 15305 / NCIMB 9373 / NCTC 2599 / NRRL B-3711).